Here is a 525-residue protein sequence, read N- to C-terminus: Transcriptional regulatory protein TOD6 (525 aa).

Positions Gly-22–Asp-82 are disordered. Over residues Leu-35 to Lys-47 the composition is skewed to polar residues. The segment covering Ser-61–Lys-71 has biased composition (basic and acidic residues). One can recognise an HTH myb-type domain in the interval Ala-67 to Leu-124. Residues Trp-97–Lys-120 constitute a DNA-binding region (H-T-H motif). The residue at position 280 (Ser-280) is a Phosphoserine. The interval Pro-283–Ser-308 is disordered. Over residues His-299–Ser-308 the composition is skewed to low complexity. 3 positions are modified to phosphoserine: Ser-333, Ser-341, and Ser-366. The disordered stretch occupies residues Thr-451 to Glu-510. 2 stretches are compositionally biased toward polar residues: residues Gly-472–Tyr-483 and Ser-495–Asp-506.

Belongs to the DOT6 family. Component of the RPD3C(L) complex composed of at least ASH1, CTI6, DEP1, DOT6, PHO23, RPD3, RXT2, RXT3, SAP30, SDS3, SIN3, TOD6; UME1 and UME6.

It is found in the cytoplasm. The protein resides in the nucleus. In terms of biological role, component of the RPD3 histone deacetylase complex RPD3C(L) responsible for the deacetylation of lysine residues on the N-terminal part of the core histones (H2A, H2B, H3 and H4). Histone deacetylation gives a tag for epigenetic repression and plays an important role in transcriptional regulation, cell cycle progression and developmental events. TOD6 binds to sequences containing the core CGATG, which resembles the PAC (Polymerase A and C) motif. The protein is Transcriptional regulatory protein TOD6 (TOD6) of Saccharomyces cerevisiae (strain ATCC 204508 / S288c) (Baker's yeast).